We begin with the raw amino-acid sequence, 196 residues long: MSNIDNLTSRIVKDAEDKKRIILSEAEEKKSKIIAKKQEKAASEEKIIIEKAETEAVAREERIISSAELQARNEKLKSKQTVISKVFETTIEELCNASSDDFKGFVKTVILNSALAGDENLILNEQGKKMIDSDFVAELNREIGSKGNITLSDKTGNFKGGFILEKNGIEINNTFEALVSSLKDEMGLEVARVLFS.

It belongs to the V-ATPase E subunit family.

Functionally, produces ATP from ADP in the presence of a proton gradient across the membrane. This Clostridium botulinum (strain Eklund 17B / Type B) protein is V-type proton ATPase subunit E.